Consider the following 279-residue polypeptide: Probable endonuclease 4 (279 aa).

9 residues coordinate Zn(2+): His68, His108, Glu143, Asp177, His180, His214, Asp227, His229, and Glu259.

The protein belongs to the AP endonuclease 2 family. Requires Zn(2+) as cofactor.

The catalysed reaction is Endonucleolytic cleavage to 5'-phosphooligonucleotide end-products.. Its function is as follows. Endonuclease IV plays a role in DNA repair. It cleaves phosphodiester bonds at apurinic or apyrimidinic (AP) sites, generating a 3'-hydroxyl group and a 5'-terminal sugar phosphate. The chain is Probable endonuclease 4 from Nitrosopumilus maritimus (strain SCM1).